The sequence spans 540 residues: Cytosolic carboxypeptidase 6 (540 aa).

The 272-residue stretch at 167-438 folds into the Peptidase M14 domain; sequence YPYTYTRFQH…NVARTFLDYY (272 aa). Residues H230, E233, and H328 each contribute to the Zn(2+) site. E401 (proton donor/acceptor) is an active-site residue.

Belongs to the peptidase M14 family. Interacts with MYLK. Zn(2+) serves as cofactor. In terms of tissue distribution, widely expressed. Expressed abundantly in testis, pituitary and brain and to a lower extent in eye, stomach, adrenal and kidney. In brain, expressed at low level in cerebellum as compared to cortex.

Its subcellular location is the cytoplasm. It localises to the cytosol. It is found in the cytoskeleton. The protein localises to the microtubule organizing center. The protein resides in the centrosome. Its subcellular location is the centriole. It localises to the golgi apparatus. It is found in the cilium basal body. The catalysed reaction is (L-glutamyl)(n+1)-gamma-L-glutamyl-L-glutamyl-[protein] + H2O = (L-glutamyl)(n)-gamma-L-glutamyl-L-glutamyl-[protein] + L-glutamate. It carries out the reaction C-terminal L-alpha-aminoacyl-L-glutamyl-L-glutamyl-[tubulin] + H2O = C-terminal L-alpha-aminoacyl-L-glutamyl-[tubulin] + L-glutamate. Functionally, metallocarboxypeptidase that mediates protein deglutamylation of tubulin and non-tubulin target proteins. Catalyzes the removal of polyglutamate side chains present on the gamma-carboxyl group of glutamate residues within the C-terminal tail of tubulin protein. Specifically cleaves tubulin long-side-chains, while it is not able to remove the branching point glutamate. Also catalyzes the removal of polyglutamate residues from the carboxy-terminus of non-tubulin proteins such as MYLK. Mediates the deglutamylation of nucleotidyltransferase CGAS, leading to CGAS antiviral defense response activation. Involved in KLF4 deglutamylation which promotes KLF4 proteasome-mediated degradation, thereby negatively regulating cell pluripotency maintenance and embryogenesis. The protein is Cytosolic carboxypeptidase 6 of Mus musculus (Mouse).